Reading from the N-terminus, the 242-residue chain is MEADALSPVGLGLLLLPFLVTLLAALCVRCRELPVSYDSTSTESLYPRSILIKPPQITVPRTPAVSYPLVTSFPPLRQPDLLPIPRSPQPLGGSHRMPSSQQNSDDANSVASYENQEPACKNVDADEDEDDYPNGYLVVLPDSSPAAVPVVSSAPVPSNPDLGDSAFSVESCEDYVNVPESEESAEASLDGSREYVNVSPEQQPVTRAELASVNSQEVEDEGEEEGVDGEEAPDYENLQELN.

At 1 to 4 (MEAD) the chain is on the extracellular side. The helical; Signal-anchor for type III membrane protein transmembrane segment at 5 to 28 (ALSPVGLGLLLLPFLVTLLAALCV) threads the bilayer. 2 S-palmitoyl cysteine lipidation sites follow: C27 and C30. The Cytoplasmic portion of the chain corresponds to 29-242 (RCRELPVSYD…PDYENLQELN (214 aa)). A Phosphothreonine modification is found at T40. 6 positions are modified to phosphoserine: S41, S44, S87, S104, S109, and S112. Residues 78-118 (QPDLLPIPRSPQPLGGSHRMPSSQQNSDDANSVASYENQEP) are disordered. Residues 97–115 (MPSSQQNSDDANSVASYEN) are compositionally biased toward polar residues. The segment at 136–139 (YLVV) is interaction with PLCG1. Phosphotyrosine is present on Y175. Interaction with GRB2, GRAP2 and PIK3R1 regions lie at residues 175–178 (YVNV) and 195–198 (YVNV). Residues 176 to 242 (VNVPESEESA…PDYENLQELN (67 aa)) are disordered. S199, S212, and S215 each carry phosphoserine. Residues 217 to 234 (EVEDEGEEEGVDGEEAPD) are compositionally biased toward acidic residues. Y235 bears the Phosphotyrosine mark.

As to quaternary structure, when phosphorylated, interacts directly with the PIK3R1 subunit of phosphoinositide 3-kinase and the SH2 domains of GRB2, GRAP, GRAP2, PLCG1 and PLCG2. Interacts indirectly with CBL, SOS, VAV, and LCP2. Interacts with SHB and SKAP2. Interacts with FCGR1A. Interacts with CLNK. Interacts with GRB2, PLCG1 and THEMIS upon TCR activation in thymocytes. Interacts with THEMIS2. In terms of processing, phosphorylated on tyrosines by ZAP70 upon TCR activation, or by SYK upon other immunoreceptor activation; which leads to the recruitment of multiple signaling molecules. Is one of the most prominently tyrosine-phosphorylated proteins detected following TCR engagement. May be dephosphorylated by PTPRJ. Phosphorylated by ITK leading to the recruitment of VAV1 to LAT-containing complexes. Post-translationally, palmitoylation of Cys-27 and Cys-30 is required for raft targeting and efficient phosphorylation. Phosphorylated on tyrosines by ZAP70 upon TCR activation, or by SYK upon other immunoreceptor activation; which leads to the recruitment of multiple signaling molecules. Is one of the most prominently tyrosine-phosphorylated proteins detected following TCR engagement. May be dephosphorylated by PTPRJ. Phosphorylated by ITK leading to the recruitment of VAV1 to LAT-containing complexes. In terms of processing, 'Lys-63'-linked ubiquitinated by TRAF6. As to expression, expressed in T-cells and mast cells.

It localises to the cell membrane. In terms of biological role, required for TCR (T-cell antigen receptor)- and pre-TCR-mediated signaling, both in mature T-cells and during their development. Involved in FCGR3 (low affinity immunoglobulin gamma Fc region receptor III)-mediated signaling in natural killer cells and FCER1 (high affinity immunoglobulin epsilon receptor)-mediated signaling in mast cells. Couples activation of these receptors and their associated kinases with distal intracellular events such as mobilization of intracellular calcium stores, PKC activation, MAPK activation or cytoskeletal reorganization through the recruitment of PLCG1, GRB2, GRAP2, and other signaling molecules. In Mus musculus (Mouse), this protein is Linker for activation of T-cells family member 1 (Lat).